The primary structure comprises 634 residues: Threonine--tRNA ligase (634 aa).

One can recognise a TGS domain in the interval 1-61 (MISLKFPNNE…SESGEFRLYT (61 aa)). Residues 242 to 532 (DHRKIGQELD…LIEHYAGAFP (291 aa)) form a catalytic region. Zn(2+) contacts are provided by Cys-333, His-384, and His-509.

This sequence belongs to the class-II aminoacyl-tRNA synthetase family. In terms of assembly, homodimer. Zn(2+) serves as cofactor.

It is found in the cytoplasm. It catalyses the reaction tRNA(Thr) + L-threonine + ATP = L-threonyl-tRNA(Thr) + AMP + diphosphate + H(+). Its function is as follows. Catalyzes the attachment of threonine to tRNA(Thr) in a two-step reaction: L-threonine is first activated by ATP to form Thr-AMP and then transferred to the acceptor end of tRNA(Thr). Also edits incorrectly charged L-seryl-tRNA(Thr). In Carboxydothermus hydrogenoformans (strain ATCC BAA-161 / DSM 6008 / Z-2901), this protein is Threonine--tRNA ligase.